A 674-amino-acid polypeptide reads, in one-letter code: Carcinine transporter (674 aa).

The Cytoplasmic portion of the chain corresponds to 1 to 53; sequence MSDIEDNDGDEYDELSELRQRHKPESQPSVDEAFDLDDLLPTIGEFGKYQKLL. The chain crosses the membrane as a helical span at residues 54–74; the sequence is VFGICLPACIPCGFCAFNQLF. Topologically, residues 75-178 are extracellular; sequence MADTPDDYWC…DLVCDQDIYP (104 aa). 3 N-linked (GlcNAc...) asparagine glycosylation sites follow: Asn-122, Asn-141, and Asn-156. A helical membrane pass occupies residues 179–199; it reads TIGLAALNTGGPVGVYLFGLL. Residues 200-206 lie on the Cytoplasmic side of the membrane; the sequence is NDRGGRR. Residues 207-227 form a helical membrane-spanning segment; sequence LSYFVCLATLLAGSLMTSLSK. The Extracellular segment spans residues 228–236; sequence DFWTWAGSR. The chain crosses the membrane as a helical span at residues 237–257; sequence VIVGLTIPAVYQIPFIISLEL. The Cytoplasmic portion of the chain corresponds to 258–264; the sequence is VGENYRS. Residues 265–285 traverse the membrane as a helical segment; sequence FVTVMTCTFYTSGIMLLSGVT. At 286–293 the chain is on the extracellular side; the sequence is YLERDWVR. A helical membrane pass occupies residues 294 to 314; the sequence is LSYITSLPFYAYFLYMFVMPE. Topologically, residues 315 to 385 are cytoplasmic; the sequence is SPRWLLMRGR…CRTPNMRLKT (71 aa). The chain crosses the membrane as a helical span at residues 386-406; sequence ILITLSWFANETVYLGLSYYG. The Extracellular portion of the chain corresponds to 407 to 414; that stretch reads PALGTNQY. The helical transmembrane segment at 415–435 threads the bilayer; the sequence is VSFFLSAVVELPSYLCCWYFM. At 436–441 the chain is on the cytoplasmic side; it reads DTWGRR. A helical membrane pass occupies residues 442-462; sequence WPLSLSMILGGVACVITVMLP. The Extracellular portion of the chain corresponds to 463-469; the sequence is DDAVDET. Residues 470 to 490 form a helical membrane-spanning segment; that stretch reads LVLYLVSKALLSASFLIIYPF. The Cytoplasmic segment spans residues 491-500; sequence AGELYPTQVR. Residues 501-521 traverse the membrane as a helical segment; it reads GIGIGASSYIGGLGLIGIPFI. The Extracellular segment spans residues 522–527; the sequence is TYLGKD. A helical transmembrane segment spans residues 528–548; that stretch reads NLKLPLVIMGFLSMLGGMTGL. The Cytoplasmic segment spans residues 549–674; it reads RLPETLHHRL…DGTMQLTHWI (126 aa). Residues 614-631 are compositionally biased toward basic and acidic residues; the sequence is RDSRRVREPAPRIDERTP. The segment at 614-647 is disordered; the sequence is RDSRRVREPAPRIDERTPLDTTASGSGRPVHRPS.

This sequence belongs to the major facilitator (TC 2.A.1) superfamily. Organic cation transporter (TC 2.A.1.19) family. Expressed in photoreceptor cells.

It localises to the cell membrane. The protein resides in the cell projection. Its subcellular location is the axon. Its function is as follows. Carcinine transporter which is required for recycling of the neurotransmitter histamine in photoreceptor neurons of the compound eye. Following histamine release from photoreceptors and its uptake by glia where it is converted to carcinine, required for the uptake of carcinine from glia into photoreceptor cells where it can be hydrolyzed by tan to form histamine and beta-alanine. This chain is Carcinine transporter, found in Drosophila melanogaster (Fruit fly).